Reading from the N-terminus, the 42-residue chain is Beta-2-microglobulin (42 aa).

The region spanning P5–B42 is the Ig-like C1-type domain.

As to quaternary structure, heterodimer of an alpha chain and a beta chain. Beta-2-microglobulin is the beta-chain of major histocompatibility complex class I molecules.

It localises to the secreted. Its function is as follows. Component of the class I major histocompatibility complex (MHC). Involved in the presentation of peptide antigens to the immune system. The protein is Beta-2-microglobulin (B2M) of Canis lupus familiaris (Dog).